The following is a 463-amino-acid chain: Phosphomethylpyrimidine synthase (463 aa).

Substrate-binding positions include Asn80, Met109, Tyr138, His173, 193-195 (SRG), 234-237 (DGLR), and Glu273. A Zn(2+)-binding site is contributed by His277. Residue Tyr300 coordinates substrate. Residue His341 participates in Zn(2+) binding. Residues Cys421, Cys424, and Cys429 each coordinate [4Fe-4S] cluster.

Belongs to the ThiC family. In terms of assembly, homodimer. [4Fe-4S] cluster serves as cofactor.

It catalyses the reaction 5-amino-1-(5-phospho-beta-D-ribosyl)imidazole + S-adenosyl-L-methionine = 4-amino-2-methyl-5-(phosphooxymethyl)pyrimidine + CO + 5'-deoxyadenosine + formate + L-methionine + 3 H(+). It participates in cofactor biosynthesis; thiamine diphosphate biosynthesis. Its function is as follows. Catalyzes the synthesis of the hydroxymethylpyrimidine phosphate (HMP-P) moiety of thiamine from aminoimidazole ribotide (AIR) in a radical S-adenosyl-L-methionine (SAM)-dependent reaction. This is Phosphomethylpyrimidine synthase from Anaeromyxobacter sp. (strain K).